A 736-amino-acid chain; its full sequence is Transcription regulator protein BACH1 (736 aa).

In terms of domain architecture, BTB spans 34 to 100 (CDVTIFVEGQ…AYTAKLILSK (67 aa)). The residue at position 196 (serine 196) is a Phosphoserine. A compositionally biased stretch (basic and acidic residues) spans 286 to 295 (MEPEETKKDP). 2 disordered regions span residues 286–312 (MEPEETKKDPASQCPTEKSEVTPFPHN) and 349–389 (KPLS…RSSV). Serine 364 and serine 445 each carry phosphoserine. Residues 557–620 (CIHDIRRRSK…GETKQNLTGL (64 aa)) enclose the bZIP domain. The basic motif stretch occupies residues 562 to 578 (RRRSKNRIAAQRCRKRK). Positions 582 to 589 (IQNLESEI) are leucine-zipper. Residues 680-719 (LPPCARGNSEPGYARGQESQQMSTATSEQAGPAEQCRQSG) are disordered. A compositionally biased stretch (polar residues) spans 696 to 708 (QESQQMSTATSEQ).

Belongs to the bZIP family. CNC subfamily. As to quaternary structure, heterodimer of BACH1 and MAFK. Ubiquitinated by the SCF(FBXL17) complex or by the by the SCF(FBXO22) complex, leading to its degradation by the proteasome. Under oxidative stress, reactive oxygen species covalently modify cysteine residues on the bZIP domain of BACH1 and release it from chromatin. If the BTB domain of BACH1 remains intact, its beta1-alpha6 degron is recognized by FBXO22, promoting its ubiquitination and degradation. If the structural integrity of the beta1-alpha6 degron is compromised, FBXL17 will transiently associate with the BACH1 BTB dimer and remodel it into stably bound monomer for ubiquitination and degradation.

Its subcellular location is the nucleus. In terms of biological role, transcriptional regulator that acts as a repressor or activator, depending on the context. Binds to NF-E2 DNA binding sites. Plays important roles in coordinating transcription activation and repression by MAFK. Together with MAF, represses the transcription of genes under the control of the NFE2L2 oxidative stress pathway. This chain is Transcription regulator protein BACH1, found in Homo sapiens (Human).